The following is a 425-amino-acid chain: 3-phosphoshikimate 1-carboxyvinyltransferase (425 aa).

Positions 21, 22, and 26 each coordinate 3-phosphoshikimate. Lys-21 is a binding site for phosphoenolpyruvate. 2 residues coordinate phosphoenolpyruvate: Gly-91 and Arg-119. 3-phosphoshikimate-binding residues include Ser-164, Gln-166, Asp-311, and Lys-338. Residue Gln-166 participates in phosphoenolpyruvate binding. The active-site Proton acceptor is the Asp-311. Phosphoenolpyruvate contacts are provided by Arg-342 and Arg-383.

It belongs to the EPSP synthase family. As to quaternary structure, monomer.

The protein localises to the cytoplasm. The catalysed reaction is 3-phosphoshikimate + phosphoenolpyruvate = 5-O-(1-carboxyvinyl)-3-phosphoshikimate + phosphate. Its pathway is metabolic intermediate biosynthesis; chorismate biosynthesis; chorismate from D-erythrose 4-phosphate and phosphoenolpyruvate: step 6/7. Catalyzes the transfer of the enolpyruvyl moiety of phosphoenolpyruvate (PEP) to the 5-hydroxyl of shikimate-3-phosphate (S3P) to produce enolpyruvyl shikimate-3-phosphate and inorganic phosphate. The polypeptide is 3-phosphoshikimate 1-carboxyvinyltransferase (Campylobacter fetus subsp. fetus (strain 82-40)).